The chain runs to 360 residues: Mitogen-activated protein kinase 1 (360 aa).

An N-acetylalanine modification is found at A2. In terms of domain architecture, Protein kinase spans 25–313; it reads YTNLSYIGEG…VEQALAHPYL (289 aa). S29 carries the post-translational modification Phosphoserine; by SGK1. Residues 31–39 and K54 each bind ATP; that span reads IGEGAYGMV. D149 (proton acceptor) is an active-site residue. At T185 the chain carries Phosphothreonine; by MAP2K1 and MAP2K2. The TXY motif lies at 185-187; that stretch reads TEY. Y187 is subject to Phosphotyrosine; by MAP2K1 and MAP2K2. A Phosphothreonine; by autocatalysis modification is found at T190. Residues S246, S248, and S284 each carry the phosphoserine modification.

Belongs to the protein kinase superfamily. CMGC Ser/Thr protein kinase family. MAP kinase subfamily. As to quaternary structure, binds both upstream activators and downstream substrates in multimolecular complexes. Interacts with ADAM15, ARHGEF2, ARRB2, DAPK1 (via death domain), HSF4, IER3, IPO7, MKNK2, MORG1, NISCH, PEA15, SGK1, and isoform 1 of NEK2. Interacts (via phosphorylated form) with TPR (via C-terminal region and phosphorylated form); the interaction requires dimerization of MAPK1/ERK2 and increases following EGF stimulation. Interacts with MAP2K1. Interacts with DUSP6. Interacts (phosphorylated form) with CAV2 ('Tyr-19'-phosphorylated form); the interaction, promoted by insulin, leads to nuclear location and MAPK1 activation. MKNK2 isoform 1 binding prevents from dephosphorylation and inactivation. Interacts with DCC. The phosphorylated form interacts with PML. Interacts with STYX. Interacts with CDK2AP2. Interacts with CAVIN4. Interacts with DUSP7; the interaction enhances DUSP7 phosphatase activity. Interacts with GIT1; this interaction is necessary for MAPK1 localization to focal adhesions. Interacts with ZNF263. Interacts with phosphoglycerate kinase PGK1; the interaction is direct, occurs under hypoxic conditions, and promotes interaction between PGK1 and PIN1. It depends on Mg(2+) as a cofactor. In terms of processing, dually phosphorylated on Thr-185 and Tyr-187, which activates the enzyme. Phosphorylated upon FLT3 and KIT signaling. Phosphorylation on Ser-29 by SGK1 results in its activation by enhancing its interaction with MAP2K1/MEK1 and MAP2K2/MEK2. Phosphorylation at Ser-246 and Ser-248 as well as autophosphorylation at Thr-190 promote nuclear localization. Ligand-activated ALK induces tyrosine phosphorylation. Dephosphorylated by PTPRJ at Tyr-187. Dephosphorylated by DUSP1 and DUSP2 at Thr-185 and Tyr-187. Post-translationally, ISGylated. Ubiquitinated by TRIM15 via 'Lys-63'-linked ubiquitination; leading to activation. Deubiquitinated by CYLD.

It localises to the nucleus. Its subcellular location is the cytoplasm. The protein resides in the cytoskeleton. It is found in the microtubule organizing center. The protein localises to the centrosome. It localises to the spindle. Its subcellular location is the membrane. The protein resides in the caveola. It is found in the cell junction. The protein localises to the focal adhesion. It carries out the reaction L-seryl-[protein] + ATP = O-phospho-L-seryl-[protein] + ADP + H(+). It catalyses the reaction L-threonyl-[protein] + ATP = O-phospho-L-threonyl-[protein] + ADP + H(+). Phosphorylated by MAP2K1/MEK1 and MAP2K2/MEK2 on Thr-185 and Tyr-187 in response to external stimuli like insulin or NGF. Both phosphorylations are required for activity. This phosphorylation causes dramatic conformational changes, which enable full activation and interaction of MAPK1/ERK2 with its substrates. Phosphorylation on Ser-29 by SGK1 results in its activation by enhancing its interaction with MAP2K1/MEK1 and MAP2K2/MEK2. Dephosphorylated and inactivated by DUSP1, DUSP3, DUSP6 and DUSP9. Inactivated by pyrimidylpyrrole inhibitors. Functionally, serine/threonine kinase which acts as an essential component of the MAP kinase signal transduction pathway. MAPK1/ERK2 and MAPK3/ERK1 are the 2 MAPKs which play an important role in the MAPK/ERK cascade. They participate also in a signaling cascade initiated by activated KIT and KITLG/SCF. Depending on the cellular context, the MAPK/ERK cascade mediates diverse biological functions such as cell growth, adhesion, survival and differentiation through the regulation of transcription, translation, cytoskeletal rearrangements. The MAPK/ERK cascade also plays a role in initiation and regulation of meiosis, mitosis, and postmitotic functions in differentiated cells by phosphorylating a number of transcription factors. About 160 substrates have already been discovered for ERKs. Many of these substrates are localized in the nucleus, and seem to participate in the regulation of transcription upon stimulation. However, other substrates are found in the cytosol as well as in other cellular organelles, and those are responsible for processes such as translation, mitosis and apoptosis. Moreover, the MAPK/ERK cascade is also involved in the regulation of the endosomal dynamics, including lysosome processing and endosome cycling through the perinuclear recycling compartment (PNRC); as well as in the fragmentation of the Golgi apparatus during mitosis. The substrates include transcription factors (such as ATF2, BCL6, ELK1, ERF, FOS, HSF4 or SPZ1), cytoskeletal elements (such as CANX, CTTN, GJA1, MAP2, MAPT, PXN, SORBS3 or STMN1), regulators of apoptosis (such as BAD, BTG2, CASP9, DAPK1, IER3, MCL1 or PPARG), regulators of translation (such as EIF4EBP1 and FXR1) and a variety of other signaling-related molecules (like ARHGEF2, DCC, FRS2 or GRB10). Protein kinases (such as RAF1, RPS6KA1/RSK1, RPS6KA3/RSK2, RPS6KA2/RSK3, RPS6KA6/RSK4, SYK, MKNK1/MNK1, MKNK2/MNK2, RPS6KA5/MSK1, RPS6KA4/MSK2, MAPKAPK3 or MAPKAPK5) and phosphatases (such as DUSP1, DUSP4, DUSP6 or DUSP16) are other substrates which enable the propagation the MAPK/ERK signal to additional cytosolic and nuclear targets, thereby extending the specificity of the cascade. Mediates phosphorylation of TPR in response to EGF stimulation. May play a role in the spindle assembly checkpoint. Phosphorylates PML and promotes its interaction with PIN1, leading to PML degradation. Phosphorylates CDK2AP2. Phosphorylates phosphoglycerate kinase PGK1 under hypoxic conditions to promote its targeting to the mitochondrion and suppress the formation of acetyl-coenzyme A from pyruvate. In terms of biological role, acts as a transcriptional repressor. Binds to a [GC]AAA[GC] consensus sequence. Repress the expression of interferon gamma-induced genes. Seems to bind to the promoter of CCL5, DMP1, IFIH1, IFITM1, IRF7, IRF9, LAMP3, OAS1, OAS2, OAS3 and STAT1. Transcriptional activity is independent of kinase activity. The protein is Mitogen-activated protein kinase 1 of Bos taurus (Bovine).